The primary structure comprises 86 residues: Small ribosomal subunit protein uS17 (86 aa).

The protein belongs to the universal ribosomal protein uS17 family. In terms of assembly, part of the 30S ribosomal subunit.

Its function is as follows. One of the primary rRNA binding proteins, it binds specifically to the 5'-end of 16S ribosomal RNA. The sequence is that of Small ribosomal subunit protein uS17 from Marinomonas sp. (strain MWYL1).